The sequence spans 273 residues: 2,3,4,5-tetrahydropyridine-2,6-dicarboxylate N-succinyltransferase (273 aa).

Residues Arg-104 and Asp-141 each contribute to the substrate site.

The protein belongs to the transferase hexapeptide repeat family. In terms of assembly, homotrimer.

The protein resides in the cytoplasm. The catalysed reaction is (S)-2,3,4,5-tetrahydrodipicolinate + succinyl-CoA + H2O = (S)-2-succinylamino-6-oxoheptanedioate + CoA. It functions in the pathway amino-acid biosynthesis; L-lysine biosynthesis via DAP pathway; LL-2,6-diaminopimelate from (S)-tetrahydrodipicolinate (succinylase route): step 1/3. This is 2,3,4,5-tetrahydropyridine-2,6-dicarboxylate N-succinyltransferase from Neisseria gonorrhoeae (strain ATCC 700825 / FA 1090).